A 460-amino-acid chain; its full sequence is Cysteine--tRNA ligase (460 aa).

Residue cysteine 27 coordinates Zn(2+). A 'HIGH' region motif is present at residues 29–39; that stretch reads PTVYDDAHLGH. Residues cysteine 202, histidine 227, and glutamate 231 each contribute to the Zn(2+) site. The short motif at 259–263 is the 'KMSKS' region element; it reads KMSKS. ATP is bound at residue lysine 262.

Belongs to the class-I aminoacyl-tRNA synthetase family. As to quaternary structure, monomer. It depends on Zn(2+) as a cofactor.

It localises to the cytoplasm. It catalyses the reaction tRNA(Cys) + L-cysteine + ATP = L-cysteinyl-tRNA(Cys) + AMP + diphosphate. The polypeptide is Cysteine--tRNA ligase (Campylobacter lari (strain RM2100 / D67 / ATCC BAA-1060)).